Here is a 205-residue protein sequence, read N- to C-terminus: dITP/XTP pyrophosphatase (205 aa).

Residue 10–15 participates in substrate binding; sequence TKNEGK. Mg(2+)-binding residues include Glu44 and Asp73. Asp73 functions as the Proton acceptor in the catalytic mechanism. Substrate-binding positions include Ser74, 156 to 159, Lys179, and 184 to 185; these read FGYD and HR.

The protein belongs to the HAM1 NTPase family. In terms of assembly, homodimer. Mg(2+) is required as a cofactor.

The enzyme catalyses XTP + H2O = XMP + diphosphate + H(+). It carries out the reaction dITP + H2O = dIMP + diphosphate + H(+). It catalyses the reaction ITP + H2O = IMP + diphosphate + H(+). Its function is as follows. Pyrophosphatase that catalyzes the hydrolysis of nucleoside triphosphates to their monophosphate derivatives, with a high preference for the non-canonical purine nucleotides XTP (xanthosine triphosphate), dITP (deoxyinosine triphosphate) and ITP. Seems to function as a house-cleaning enzyme that removes non-canonical purine nucleotides from the nucleotide pool, thus preventing their incorporation into DNA/RNA and avoiding chromosomal lesions. The protein is dITP/XTP pyrophosphatase of Dictyoglomus thermophilum (strain ATCC 35947 / DSM 3960 / H-6-12).